Consider the following 505-residue polypeptide: UDP-N-acetylmuramate--L-alanine ligase (505 aa).

164 to 170 (GTHGKTT) lines the ATP pocket.

Belongs to the MurCDEF family.

The protein resides in the cytoplasm. It carries out the reaction UDP-N-acetyl-alpha-D-muramate + L-alanine + ATP = UDP-N-acetyl-alpha-D-muramoyl-L-alanine + ADP + phosphate + H(+). Its pathway is cell wall biogenesis; peptidoglycan biosynthesis. Functionally, cell wall formation. The sequence is that of UDP-N-acetylmuramate--L-alanine ligase from Synechocystis sp. (strain ATCC 27184 / PCC 6803 / Kazusa).